A 236-amino-acid chain; its full sequence is MQKLEELYSGKAKSIFKTDDADLFVMEFRDDTSAFDGVKKAKLSRKGEVNNKFNAFIMSKLAEAGVPVHFVRLLSERESLVKRLQMIPVECVVRNVAAGSLCRRLGVREGMVLTPPTYELFLKNDELHDPMINEHHARAFGWATDAQLEEMKALTFKVNDILKALFDAAGMTLVDYKLEFGLIDGKVTLGDEFSPDGCRIWDKATGEKMDKDRFRQDLGDVIEYYEEVGRRLGVQF.

The protein belongs to the SAICAR synthetase family.

It catalyses the reaction 5-amino-1-(5-phospho-D-ribosyl)imidazole-4-carboxylate + L-aspartate + ATP = (2S)-2-[5-amino-1-(5-phospho-beta-D-ribosyl)imidazole-4-carboxamido]succinate + ADP + phosphate + 2 H(+). The protein operates within purine metabolism; IMP biosynthesis via de novo pathway; 5-amino-1-(5-phospho-D-ribosyl)imidazole-4-carboxamide from 5-amino-1-(5-phospho-D-ribosyl)imidazole-4-carboxylate: step 1/2. The chain is Phosphoribosylaminoimidazole-succinocarboxamide synthase from Hahella chejuensis (strain KCTC 2396).